A 611-amino-acid polypeptide reads, in one-letter code: tRNA uridine 5-carboxymethylaminomethyl modification enzyme MnmG (611 aa).

FAD contacts are provided by residues 12–17 (GGGHAG), valine 124, and serine 179. Residue 271-285 (GPRYCPSVEDKIVRF) participates in NAD(+) binding. Glutamine 368 serves as a coordination point for FAD.

The protein belongs to the MnmG family. As to quaternary structure, homodimer. Heterotetramer of two MnmE and two MnmG subunits. FAD is required as a cofactor.

Its subcellular location is the cytoplasm. Functionally, NAD-binding protein involved in the addition of a carboxymethylaminomethyl (cmnm) group at the wobble position (U34) of certain tRNAs, forming tRNA-cmnm(5)s(2)U34. In Mycoplasma mobile (strain ATCC 43663 / 163K / NCTC 11711) (Mesomycoplasma mobile), this protein is tRNA uridine 5-carboxymethylaminomethyl modification enzyme MnmG.